Here is a 74-residue protein sequence, read N- to C-terminus: UPF0435 protein BCB4264_A0471 (74 aa).

This sequence belongs to the UPF0435 family.

This chain is UPF0435 protein BCB4264_A0471, found in Bacillus cereus (strain B4264).